Here is a 653-residue protein sequence, read N- to C-terminus: MDEIDEMFSNLLGEMDLLTQSLEIETLPPPTRSASTTEINFSVGFKDLNESLNALEDNDLDALMAELVADITDAEQNVATYNNKSTAPFPPADASNSYHFHPPPMPSIITEDLSLLPPPPEFDPHYPPPPPDPLTEPKTQEELESKAKANKINLALSKMKEAKVKKRIVKVHMIDSSTKTLMVEEHQTVRDVLDNLFEKTHCDCSIEWCLFEVTPELQIERFFEDHENIVEILANWTRDSVNTIHFLEKNEKYAVFKKPQNFYMATKGSADLKDMNEKNKVSLLEQSFCGASVTVPELEAALYLKEDGKKSWKKRYFLLRASGIYYVPKGKTKTSRDLACFVQFDNVNVYYGTQYRMKYKAPTDHCFVLKHPQIQKESQYIKYLCCEDPWLLHQWVTGIRIAKYGKILYDNYKTAVQRGGLASHWSTLGSSSVSTAAGSSQGNGQICQNVTTISSSFSDAWKHGEANKQEKKSSEVNKPETKSATPTVTKRPPPTPRRASSISRVTDHPAFPPKPKAINTDIMSGPPQFPPPEPLQPADDFLPPPPPDFFDAPPDFLPPSPPSFMSNAENPPPPPVTQLQMSNAPAPPPPPPPPAPAANVPPLPVKKHPPKPPKRQSIVGPMPGTNAHGGAGGQPDFMSDLMKALQKKREPPT.

The segment at 82–141 is disordered; that stretch reads NNKSTAPFPPADASNSYHFHPPPMPSIITEDLSLLPPPPEFDPHYPPPPPDPLTEPKTQE. Residues 116-134 show a composition bias toward pro residues; the sequence is LPPPPEFDPHYPPPPPDPL. A Ras-associating domain is found at 165 to 253; the sequence is KKRIVKVHMI…IHFLEKNEKY (89 aa). The region spanning 295–404 is the PH domain; it reads VPELEAALYL…WVTGIRIAKY (110 aa). Residues 462 to 481 show a composition bias toward basic and acidic residues; the sequence is KHGEANKQEKKSSEVNKPET. Residues 462–653 are disordered; sequence KHGEANKQEK…ALQKKREPPT (192 aa). Residues 585-604 show a composition bias toward pro residues; the sequence is PAPPPPPPPPAPAANVPPLP. Positions 605–614 are enriched in basic residues; that stretch reads VKKHPPKPPK.

This sequence belongs to the MRL family.

It localises to the cell membrane. It is found in the cytoplasm. Its subcellular location is the cytoskeleton. Its function is as follows. Appears to function in the signal transduction from Ras activation to actin cytoskeletal remodeling. This chain is Amyloid beta A4 precursor protein-binding family B member 1-interacting protein (apbb1ip), found in Xenopus laevis (African clawed frog).